Here is a 150-residue protein sequence, read N- to C-terminus: Nucleoside diphosphate kinase (150 aa).

ATP-binding residues include Lys9, Phe57, Arg85, Thr91, Arg102, and Asn112. His115 serves as the catalytic Pros-phosphohistidine intermediate.

It belongs to the NDK family. It depends on Mg(2+) as a cofactor.

The protein localises to the cytoplasm. It catalyses the reaction a 2'-deoxyribonucleoside 5'-diphosphate + ATP = a 2'-deoxyribonucleoside 5'-triphosphate + ADP. The enzyme catalyses a ribonucleoside 5'-diphosphate + ATP = a ribonucleoside 5'-triphosphate + ADP. Major role in the synthesis of nucleoside triphosphates other than ATP. The ATP gamma phosphate is transferred to the NDP beta phosphate via a ping-pong mechanism, using a phosphorylated active-site intermediate. This chain is Nucleoside diphosphate kinase, found in Methanoregula boonei (strain DSM 21154 / JCM 14090 / 6A8).